We begin with the raw amino-acid sequence, 300 residues long: MKIGVIMGGISTEREVSLNSGREVIKYLELLEHEIIPIIIDKKEDVMEKAKGIDFAFLALHGKFGEDGTVQSVLQTLDIPYSGCGPLTSAICMDKDMTKKILKYANINTADWVNVSSAENIDYEAIEKIGYPVFVKPNSGGSSVATNLVKDKEGIKEAVELALKYDKEVMIENYTKGEEITCCMLNGKMLPVLAIRPHAEFFDYTAKYADGGSDEVVIELEENLHKKVEEMALACWKELKCEVYVRVDMIVKDGIPYVLELNTLPGMTKNSLFPKSANAVGISFAELLNSIVKYSLEVER.

Residues Lys-99–Lys-293 enclose the ATP-grasp domain. Position 126–181 (Ile-126–Thr-181) interacts with ATP. Mg(2+) is bound by residues Asp-248, Glu-260, and Asn-262.

The protein belongs to the D-alanine--D-alanine ligase family. Mg(2+) is required as a cofactor. The cofactor is Mn(2+).

The protein resides in the cytoplasm. It catalyses the reaction 2 D-alanine + ATP = D-alanyl-D-alanine + ADP + phosphate + H(+). The protein operates within cell wall biogenesis; peptidoglycan biosynthesis. Cell wall formation. The chain is D-alanine--D-alanine ligase from Clostridium botulinum (strain Okra / Type B1).